A 107-amino-acid polypeptide reads, in one-letter code: High mobility group protein HMG-I/HMG-Y (107 aa).

The segment covering 1 to 13 (MSESVSKSSQPLA) has biased composition (polar residues). Positions 1-107 (MSESVSKSSQ…ISQESSEEEQ (107 aa)) are disordered. N-acetylserine is present on Ser-2. At Lys-7 the chain carries N6-acetyllysine. An ADP-ribosylserine modification is found at Ser-8. ADP-ribosylserine; alternate is present on Ser-9. The residue at position 9 (Ser-9) is a Phosphoserine; alternate. An N6-acetyllysine; alternate modification is found at Lys-15. Lys-15 participates in a covalent cross-link: Glycyl lysine isopeptide (Lys-Gly) (interchain with G-Cter in SUMO2); alternate. Over residues 15-24 (KQEKDGTEKR) the composition is skewed to basic and acidic residues. The segment at residues 21–31 (TEKRGRGRPRK) is a DNA-binding region (a.T hook 1). At Arg-26 the chain carries Asymmetric dimethylarginine; alternate. Arg-26 carries the post-translational modification Omega-N-methylarginine; alternate. Arg-26 carries the symmetric dimethylarginine; alternate modification. Ser-36 carries the post-translational modification Phosphoserine; by HIPK2 and CDC2. Residue Thr-39 is modified to Phosphothreonine. Phosphoserine occurs at positions 44 and 49. Phosphothreonine; by HIPK2 and CDC2 is present on Thr-53. DNA-binding regions (a.T hook) lie at residues 53-63 (TPKRPRGRPKG) and 78-89 (TPGRKPRGRPKK). The interaction with HIPK2 stretch occupies residues 53 to 77 (TPKRPRGRPKGSKNKGTAKTRKVTT). Residues 55 to 74 (KRPRGRPKGSKNKGTAKTRK) show a composition bias toward basic residues. Asymmetric dimethylarginine; by PRMT6; alternate occurs at positions 58 and 60. Residues Arg-58 and Arg-60 each carry the omega-N-methylarginine; by PRMT6; alternate modification. At Thr-78 the chain carries Phosphothreonine; by HIPK2 and CDC2. A compositionally biased stretch (acidic residues) spans 93–107 (EEEEGISQESSEEEQ). Residues Ser-99, Ser-102, and Ser-103 each carry the phosphoserine modification.

Belongs to the HMGA family. In terms of assembly, interacts with HIPK2. In terms of processing, isoforms HMG-I and HMG-Y can be phosphorylated by HIPK2. Phosphorylation may modulate DNA-binding affinity. Methylation at Arg-58 is mutually exclusive with methylation at Arg-60.

The protein localises to the nucleus. Its subcellular location is the chromosome. HMG-I/Y bind preferentially to the minor groove of A+T rich regions in double-stranded DNA. It is suggested that these proteins could function in nucleosome phasing and in the 3'-end processing of mRNA transcripts. They are also involved in the transcription regulation of genes containing, or in close proximity to A+T-rich regions. The sequence is that of High mobility group protein HMG-I/HMG-Y (Hmga1) from Rattus norvegicus (Rat).